A 235-amino-acid chain; its full sequence is Ion-translocating oxidoreductase complex subunit E (235 aa).

Transmembrane regions (helical) follow at residues L63 to F83, I93 to A113, T117 to G137, I152 to L172, and S206 to I226.

This sequence belongs to the NqrDE/RnfAE family. In terms of assembly, the complex is composed of six subunits: RnfA, RnfB, RnfC, RnfD, RnfE and RnfG.

It localises to the cell inner membrane. Its function is as follows. Part of a membrane-bound complex that couples electron transfer with translocation of ions across the membrane. The protein is Ion-translocating oxidoreductase complex subunit E of Haemophilus influenzae (strain ATCC 51907 / DSM 11121 / KW20 / Rd).